The following is an 89-amino-acid chain: UPF0145 protein MJ1170 (89 aa).

This sequence belongs to the UPF0145 family. Highly divergent.

This chain is UPF0145 protein MJ1170, found in Methanocaldococcus jannaschii (strain ATCC 43067 / DSM 2661 / JAL-1 / JCM 10045 / NBRC 100440) (Methanococcus jannaschii).